The chain runs to 547 residues: MTENAPTELAITGMTCDGCAAHVRKALEGVPGVREAQVSYPDATARVVLEGEVPMQRLIKAVVASGYGVHPRSDGASSTNDGQELHIAVIGSGGAAMACALKAVERGARVTLIERSTIGGTCVNIGCVPSKIMIRAAHIAHLRRESPFDGGIQAVAPTIQRTALLVQQQARVDELRHAKYEGILDGNPAITVLRGEARFKDSRSVVVHLNDGGERVVMFDRCLVATGASPAVPPIPGLKDTPYWTSTEGLVSESIPERLAVIGSSVVALELAQAFARLGSHVTILARGTLFLREDPAIGEAITAAFRAEGIEVLEHTQASQVAYADGEFVLATGHGELRADKLLVATGRAPNTRRLNLEAAGVAINAQGAIVIDQGMRTNSPNIYAAGDCTDQPQFVYVAAAAGTRAAINMMGGSAALDLTAMPAVVFTDPQVATVGYSGAEAHRDGIETDSRTLTLDNVPRALANFNTRGFIKLVAEVGSGRLIGVQVVAPEAGELIQTAALAIRNRMTVQELADQLFPYLTMVEGLKLAAQTFTRDVKQLSCCAG.

Positions 5 to 70 constitute an HMA domain; it reads APTELAITGM…AVVASGYGVH (66 aa). Positions 16 and 19 each coordinate a metal cation. FAD is bound by residues Ala-96 and Thr-121. An intrachain disulfide couples Cys-122 to Cys-127. Lys-131, Ala-197, Asp-389, and Val-397 together coordinate FAD. 2 residues coordinate Hg(2+): Cys-544 and Cys-545.

It belongs to the class-I pyridine nucleotide-disulfide oxidoreductase family. Homodimer. FAD is required as a cofactor.

The enzyme catalyses Hg + NADP(+) + H(+) = Hg(2+) + NADPH. In terms of biological role, resistance to Hg(2+) in bacteria appears to be governed by a specialized system which includes mercuric reductase. MerA protein is responsible for volatilizing mercury as Hg(0). The protein is Mercuric reductase (merA) of Acidithiobacillus ferrooxidans (Thiobacillus ferrooxidans).